Reading from the N-terminus, the 716-residue chain is Splicing factor Cactin (716 aa).

A disordered region spans residues 1–104 (MGSHGKGKRD…SKKAQKKALR (104 aa)). Over residues 10–22 (DRSGRQKKRRDES) the composition is skewed to basic and acidic residues. Residues 25–45 (GSESESYTSDSDGSDDLSPPR) show a composition bias toward low complexity. Residues 46 to 61 (SSRRKKGSSSRRTRRR) show a composition bias toward basic residues. Residues 81-95 (SSKDYSEEKVTEYMS) show a composition bias toward basic and acidic residues. Positions 153-201 (SVKAEKRRHRERMTEVEKVKKRREERAVEKARHEEEMALLARERARAEF) form a coiled coil. At Ser450 the chain carries Phosphoserine. A disordered region spans residues 466 to 525 (VEENEEEINDTNLSDAEEAFSPEPVAEEEEADEAAEAAGSFSPELMHGDDREEAIDPEED). The segment covering 468-500 (ENEEEINDTNLSDAEEAFSPEPVAEEEEADEAA) has biased composition (acidic residues).

Belongs to the CACTIN family. Interacts with At5g63440.

Its subcellular location is the nucleus speckle. Functionally, plays a role in pre-mRNA splicing by facilitating excision of a subset of introns. Required for embryogenesis. The sequence is that of Splicing factor Cactin (CTN) from Arabidopsis thaliana (Mouse-ear cress).